A 289-amino-acid polypeptide reads, in one-letter code: tRNA pseudouridine synthase B (289 aa).

The active-site Nucleophile is the Asp38.

The protein belongs to the pseudouridine synthase TruB family. Type 1 subfamily.

The enzyme catalyses uridine(55) in tRNA = pseudouridine(55) in tRNA. In terms of biological role, responsible for synthesis of pseudouridine from uracil-55 in the psi GC loop of transfer RNAs. The chain is tRNA pseudouridine synthase B from Clostridium novyi (strain NT).